Reading from the N-terminus, the 540-residue chain is Membrane protein insertase YidC (540 aa).

5 helical membrane passes run 1–21 (MVVQNNFLFIAFIFVTFMMLD), 351–371 (NWGISIIIITFMVRGIMFPLT), 418–438 (LGGCMPLIIQMPIFLALYYML), 464–484 (ILPIIMGITMFLIQKISPSSI), and 497–517 (PLIFTIFFLWFPSGLVLYYII).

This sequence belongs to the OXA1/ALB3/YidC family. Type 1 subfamily. As to quaternary structure, interacts with the Sec translocase complex via SecD. Specifically interacts with transmembrane segments of nascent integral membrane proteins during membrane integration.

The protein resides in the cell membrane. Functionally, required for the insertion and/or proper folding and/or complex formation of integral membrane proteins into the membrane. Involved in integration of membrane proteins that insert both dependently and independently of the Sec translocase complex, as well as at least some lipoproteins. Aids folding of multispanning membrane proteins. The protein is Membrane protein insertase YidC of Wigglesworthia glossinidia brevipalpis.